The chain runs to 561 residues: Putative transport protein YbjL (561 aa).

A run of 5 helical transmembrane segments spans residues 8 to 28 (LLNGNYILLLFVVLALGLCLG), 32 to 52 (LGSIQLGNSIGVLVVSLLLGQ), 66 to 86 (FMLFIFCVGVEAGPNFFSIFF), 94 to 114 (MLALVMVGSALVIALGLGKLF), and 158 to 178 (NLSLGYALTYLIGLVSLIVGA). RCK C-terminal domains are found at residues 200 to 288 (RGLD…SFRN) and 292 to 373 (VFDR…RIGF). A run of 6 helical transmembrane segments spans residues 383-403 (LLAFCAFFVIGLMIGMITFQF), 406-426 (FSFGMGNAAGLLFAGIMLGFM), 451-471 (VFMAGVGLSAGSGINNGLGAI), 475-495 (MLIAGLIVSLVPVVICFLFGA), 503-523 (ALLFGAMMGARTCAPAMEIIS), and 540-560 (AIANVLLTLAGTIIVMVCPGL).

Belongs to the AAE transporter (TC 2.A.81) family. YbjL subfamily.

The protein localises to the cell membrane. This chain is Putative transport protein YbjL, found in Shigella dysenteriae serotype 1 (strain Sd197).